The chain runs to 255 residues: MNILIANDDGVFAPGIQALADALKPLGRVVVVAPESERSGFSSALTLDRPLRPIQIAEDVWAVNGTPADCVYLSMNGLFDFEFDLVVSGINRGANLGDDVLYSGTVGAAFEGRLMKQPAIAVSLAGPDVRSYDHKDDYAQAAKWVHDFITKGLPALPPRHIFNINIPDVPQLKGTQITYQGRRAQSKPITSHVDPRGRQVYWIGLAGEAVTDPQRIASQIQSDFFAVANGFVSVTPIQMDATNYAVLEDLQASLG.

Positions 8, 9, 39, and 91 each coordinate a divalent metal cation.

Belongs to the SurE nucleotidase family. Requires a divalent metal cation as cofactor.

The protein resides in the cytoplasm. The catalysed reaction is a ribonucleoside 5'-phosphate + H2O = a ribonucleoside + phosphate. Functionally, nucleotidase that shows phosphatase activity on nucleoside 5'-monophosphates. The protein is 5'-nucleotidase SurE of Acinetobacter baumannii (strain SDF).